We begin with the raw amino-acid sequence, 340 residues long: UDP-3-O-acylglucosamine N-acyltransferase (340 aa).

Catalysis depends on His237, which acts as the Proton acceptor.

Belongs to the transferase hexapeptide repeat family. LpxD subfamily. Homotrimer.

The catalysed reaction is a UDP-3-O-[(3R)-3-hydroxyacyl]-alpha-D-glucosamine + a (3R)-hydroxyacyl-[ACP] = a UDP-2-N,3-O-bis[(3R)-3-hydroxyacyl]-alpha-D-glucosamine + holo-[ACP] + H(+). It participates in bacterial outer membrane biogenesis; LPS lipid A biosynthesis. Catalyzes the N-acylation of UDP-3-O-acylglucosamine using 3-hydroxyacyl-ACP as the acyl donor. Is involved in the biosynthesis of lipid A, a phosphorylated glycolipid that anchors the lipopolysaccharide to the outer membrane of the cell. This Desulfosudis oleivorans (strain DSM 6200 / JCM 39069 / Hxd3) (Desulfococcus oleovorans) protein is UDP-3-O-acylglucosamine N-acyltransferase.